Here is a 391-residue protein sequence, read N- to C-terminus: Succinate--CoA ligase [ADP-forming] subunit beta (391 aa).

One can recognise an ATP-grasp domain in the interval 9–247 (KDILAKYGVA…IAEEDPLEVE (239 aa)). ATP is bound by residues K49, 56–58 (GRG), E102, A105, and E110. 2 residues coordinate Mg(2+): N202 and D216. Residues N267 and 324 to 326 (GIL) each bind substrate.

Belongs to the succinate/malate CoA ligase beta subunit family. As to quaternary structure, heterotetramer of two alpha and two beta subunits. The cofactor is Mg(2+).

It catalyses the reaction succinate + ATP + CoA = succinyl-CoA + ADP + phosphate. The enzyme catalyses GTP + succinate + CoA = succinyl-CoA + GDP + phosphate. Its pathway is carbohydrate metabolism; tricarboxylic acid cycle; succinate from succinyl-CoA (ligase route): step 1/1. Its function is as follows. Succinyl-CoA synthetase functions in the citric acid cycle (TCA), coupling the hydrolysis of succinyl-CoA to the synthesis of either ATP or GTP and thus represents the only step of substrate-level phosphorylation in the TCA. The beta subunit provides nucleotide specificity of the enzyme and binds the substrate succinate, while the binding sites for coenzyme A and phosphate are found in the alpha subunit. In Acidobacterium capsulatum (strain ATCC 51196 / DSM 11244 / BCRC 80197 / JCM 7670 / NBRC 15755 / NCIMB 13165 / 161), this protein is Succinate--CoA ligase [ADP-forming] subunit beta.